The primary structure comprises 351 residues: Transcription factor bHLH93 (351 aa).

The bHLH domain occupies 174–223 (GQPSKNLMAERRRRKRLNDRLSMLRSIVPKISKMDRTSILGDAIDYMKEL).

Homodimer. Interacts with FAMA. In terms of tissue distribution, broadly expressed.

The protein localises to the nucleus. Its function is as follows. Transcription factor. May be involved in the differentiation of stomatal guard cells. The polypeptide is Transcription factor bHLH93 (BHLH93) (Arabidopsis thaliana (Mouse-ear cress)).